Reading from the N-terminus, the 548-residue chain is Probable malate:quinone oxidoreductase (548 aa).

Belongs to the MQO family. It depends on FAD as a cofactor.

The catalysed reaction is (S)-malate + a quinone = a quinol + oxaloacetate. It functions in the pathway carbohydrate metabolism; tricarboxylic acid cycle; oxaloacetate from (S)-malate (quinone route): step 1/1. The sequence is that of Probable malate:quinone oxidoreductase from Escherichia coli (strain SE11).